The following is a 92-amino-acid chain: SPbeta prophage-derived DNA-binding protein HU 2 (92 aa).

The residue at position 4 (Thr4) is a Phosphothreonine. The tract at residues Arg55–Pro77 is disordered.

This sequence belongs to the bacterial histone-like protein family. As to quaternary structure, homodimer.

In terms of biological role, histone-like DNA-binding protein which is capable of wrapping DNA to stabilize it, and thus to prevent its denaturation under extreme environmental conditions. This chain is SPbeta prophage-derived DNA-binding protein HU 2 (hup2), found in Bacillus subtilis (strain 168).